We begin with the raw amino-acid sequence, 128 residues long: uncharacterized protein (128 aa).

Helical transmembrane passes span 33–53 (LLYISIIFLFLNYVVDIVCYV) and 61–81 (FFCWVFLNLGVIGIIITVIIY). Over residues 99–120 (DSLNQNVGESQSNEPPKYTSTF) the composition is skewed to polar residues. Residues 99-128 (DSLNQNVGESQSNEPPKYTSTFMDELDKQD) form a disordered region.

The protein localises to the membrane. This is an uncharacterized protein from Schizosaccharomyces pombe (strain 972 / ATCC 24843) (Fission yeast).